The primary structure comprises 247 residues: UPF0280 protein MMP1236 (247 aa).

It belongs to the UPF0280 family.

The chain is UPF0280 protein MMP1236 from Methanococcus maripaludis (strain DSM 14266 / JCM 13030 / NBRC 101832 / S2 / LL).